A 400-amino-acid polypeptide reads, in one-letter code: Nicotinate phosphoribosyltransferase (400 aa).

His-220 carries the phosphohistidine; by autocatalysis modification.

The protein belongs to the NAPRTase family. In terms of processing, transiently phosphorylated on a His residue during the reaction cycle. Phosphorylation strongly increases the affinity for substrates and increases the rate of nicotinate D-ribonucleotide production. Dephosphorylation regenerates the low-affinity form of the enzyme, leading to product release.

It carries out the reaction nicotinate + 5-phospho-alpha-D-ribose 1-diphosphate + ATP + H2O = nicotinate beta-D-ribonucleotide + ADP + phosphate + diphosphate. Its pathway is cofactor biosynthesis; NAD(+) biosynthesis; nicotinate D-ribonucleotide from nicotinate: step 1/1. Catalyzes the synthesis of beta-nicotinate D-ribonucleotide from nicotinate and 5-phospho-D-ribose 1-phosphate at the expense of ATP. The protein is Nicotinate phosphoribosyltransferase of Escherichia fergusonii (strain ATCC 35469 / DSM 13698 / CCUG 18766 / IAM 14443 / JCM 21226 / LMG 7866 / NBRC 102419 / NCTC 12128 / CDC 0568-73).